The chain runs to 142 residues: Large ribosomal subunit protein uL13 (142 aa).

The protein belongs to the universal ribosomal protein uL13 family. Part of the 50S ribosomal subunit.

Functionally, this protein is one of the early assembly proteins of the 50S ribosomal subunit, although it is not seen to bind rRNA by itself. It is important during the early stages of 50S assembly. The sequence is that of Large ribosomal subunit protein uL13 from Baumannia cicadellinicola subsp. Homalodisca coagulata.